A 130-amino-acid chain; its full sequence is Protein ApaG (130 aa).

Positions 3-127 (SEVTRSIRVT…FSLDSPHGRS (125 aa)) constitute an ApaG domain.

The chain is Protein ApaG from Rhodospirillum centenum (strain ATCC 51521 / SW).